The chain runs to 85 residues: Large ribosomal subunit protein bL27 (85 aa).

The segment at 1-21 (MAHKKAGGSTRNGRDSNAQRL) is disordered. The segment covering 9–19 (STRNGRDSNAQ) has biased composition (polar residues).

Belongs to the bacterial ribosomal protein bL27 family.

This chain is Large ribosomal subunit protein bL27, found in Pectobacterium carotovorum subsp. carotovorum (strain PC1).